Consider the following 244-residue polypeptide: Putative outer membrane protein RC0105 (244 aa).

A signal peptide spans 1–23; sequence MLRIVKKLGIILFVSTISINSFA.

Belongs to the OmpW/AlkL family.

The protein localises to the cell outer membrane. The sequence is that of Putative outer membrane protein RC0105 from Rickettsia conorii (strain ATCC VR-613 / Malish 7).